A 926-amino-acid chain; its full sequence is Probable Xaa-Pro aminopeptidase PTT_10145 (926 aa).

Residues D274, D285, E435, and E476 each contribute to the Mn(2+) site. Disordered stretches follow at residues 505 to 538 (GNPG…PGIS), 595 to 615 (KRDS…LSPV), 668 to 696 (SSST…EEKH), 711 to 741 (IGQS…KAAT), and 865 to 926 (MPVL…FLTR). The span at 506–515 (NPGTTEILNP) shows a compositional bias: polar residues. Composition is skewed to basic and acidic residues over residues 685–696 (SRQKSHTVEEKH) and 719–730 (GPEERRRKAQSD). Residues 887 to 897 (NNATNKRSMID) show a composition bias toward polar residues. Basic and acidic residues predominate over residues 900-915 (PAERRTRPERPERPAR).

It belongs to the peptidase M24B family. Requires Mn(2+) as cofactor.

The enzyme catalyses Release of any N-terminal amino acid, including proline, that is linked to proline, even from a dipeptide or tripeptide.. Functionally, catalyzes the removal of a penultimate prolyl residue from the N-termini of peptides. The polypeptide is Probable Xaa-Pro aminopeptidase PTT_10145 (Pyrenophora teres f. teres (strain 0-1) (Barley net blotch fungus)).